Here is a 134-residue protein sequence, read N- to C-terminus: Phospholipase A2 (134 aa).

Residues Trp8, Gly10, and Gly12 each coordinate Ca(2+). Cystine bridges form between Cys9–Cys31, Cys30–Cys70, Cys37–Cys63, Cys61–Cys95, and Cys105–Cys113. Asn13 carries an N-linked (GlcNAc...) asparagine glycan. His34 is an active-site residue. A Ca(2+)-binding site is contributed by Asp35. The active site involves Asp64.

The protein belongs to the phospholipase A2 family. Group III subfamily. Requires Ca(2+) as cofactor. Expressed by the venom gland.

Its subcellular location is the secreted. The catalysed reaction is a 1,2-diacyl-sn-glycero-3-phosphocholine + H2O = a 1-acyl-sn-glycero-3-phosphocholine + a fatty acid + H(+). Functionally, PLA2 catalyzes the calcium-dependent hydrolysis of the 2-acyl groups in 3-sn-phosphoglycerides. In Apis cerana cerana (Oriental honeybee), this protein is Phospholipase A2.